Consider the following 403-residue polypeptide: Probable eukaryotic initiation factor 4A (403 aa).

A disordered region spans residues 1–29 (MAQNDKIAPQDQDSFLDDQPGVRPIPSFD). Positions 26–54 (PSFDDMPLHQNLLRGIYSYGFEKPSSIQQ) match the Q motif motif. The 174-residue stretch at 57–230 (IAPFTRGGDI…KKFMRDPVRI (174 aa)) folds into the Helicase ATP-binding domain. Residue 70-77 (AQSGTGKT) participates in ATP binding. A DEAD box motif is present at residues 178–181 (DEAD). Positions 241–401 (GIKQFFIAVE…ELPVDFAAYL (161 aa)) constitute a Helicase C-terminal domain.

It belongs to the DEAD box helicase family. eIF4A subfamily. In terms of assembly, eIF4F is a multi-subunit complex, the composition of which varies with external and internal environmental conditions. It is composed of at least EIF4A, EIF4E and EIF4G.

It catalyses the reaction ATP + H2O = ADP + phosphate + H(+). In terms of biological role, ATP-dependent RNA helicase which is a subunit of the eIF4F complex involved in cap recognition and is required for mRNA binding to ribosome. In the current model of translation initiation, eIF4A unwinds RNA secondary structures in the 5'-UTR of mRNAs which is necessary to allow efficient binding of the small ribosomal subunit, and subsequent scanning for the initiator codon. In Leishmania infantum, this protein is Probable eukaryotic initiation factor 4A.